The following is a 397-amino-acid chain: Subtilisin-like protease 12 (397 aa).

Positions 1–19 (MSIFKLMVIYFTLFWVVNA) are cleaved as a signal peptide. The propeptide occupies 20 to 116 (AQLLDLDSHG…VEPNREMKAA (97 aa)). One can recognise an Inhibitor I9 domain in the interval 35–115 (YIVVMKNGVS…FVEPNREMKA (81 aa)). Residues Asn-123, Asn-136, and Asn-150 are each glycosylated (N-linked (GlcNAc...) asparagine). One can recognise a Peptidase S8 domain in the interval 125–397 (TWGLARISHM…DKLLYNGSGA (273 aa)). Residues Asp-157 and His-188 each act as charge relay system in the active site. Asn-249, Asn-305, and Asn-334 each carry an N-linked (GlcNAc...) asparagine glycan. Ser-343 serves as the catalytic Charge relay system. Residues Asn-385 and Asn-393 are each glycosylated (N-linked (GlcNAc...) asparagine).

This sequence belongs to the peptidase S8 family.

The protein localises to the secreted. In terms of biological role, secreted subtilisin-like serine protease with keratinolytic activity that contributes to pathogenicity. In Arthroderma gypseum (strain ATCC MYA-4604 / CBS 118893) (Microsporum gypseum), this protein is Subtilisin-like protease 12 (SUB12).